The following is a 422-amino-acid chain: S100P-binding protein (422 aa).

Disordered regions lie at residues 1–28 (MMCS…SWSS), 61–135 (LKDD…TPAK), and 170–292 (YVSE…DSGK). Positions 80–90 (DDSRNVEKGEK) are enriched in basic and acidic residues. Serine 195 carries the post-translational modification Phosphoserine. The span at 231–241 (VSDKNMSDSKK) shows a compositional bias: basic and acidic residues. Polar residues predominate over residues 255–269 (TPNTGSSRRNGSYKS). A compositionally biased stretch (low complexity) spans 274 to 283 (KLPVSSSSSK).

In terms of assembly, interacts with S100P.

Its subcellular location is the nucleus. The polypeptide is S100P-binding protein (Bos taurus (Bovine)).